The primary structure comprises 332 residues: D-alanine--D-alanine ligase (332 aa).

Positions 124-329 constitute an ATP-grasp domain; the sequence is KMWFSALNIP…FPDYLLSNIN (206 aa). 154–209 serves as a coordination point for ATP; sequence ALVNWGSIFVKAASQGSSVGCYRIDNQEDVASTLAQAFTYSDYVIVEKTISARELE. 3 residues coordinate Mg(2+): D283, E296, and N298.

Belongs to the D-alanine--D-alanine ligase family. Mg(2+) is required as a cofactor. Requires Mn(2+) as cofactor.

It localises to the cytoplasm. The enzyme catalyses 2 D-alanine + ATP = D-alanyl-D-alanine + ADP + phosphate + H(+). Its pathway is cell wall biogenesis; peptidoglycan biosynthesis. In terms of biological role, cell wall formation. The chain is D-alanine--D-alanine ligase from Shewanella piezotolerans (strain WP3 / JCM 13877).